We begin with the raw amino-acid sequence, 231 residues long: Probable methylthioribulose-1-phosphate dehydratase (231 aa).

Substrate is bound at residue cysteine 90. Zn(2+) contacts are provided by histidine 108 and histidine 110. Glutamate 132 functions as the Proton donor/acceptor in the catalytic mechanism. Residue histidine 188 participates in Zn(2+) binding.

Belongs to the aldolase class II family. MtnB subfamily. It depends on Zn(2+) as a cofactor.

It localises to the cytoplasm. It carries out the reaction 5-(methylsulfanyl)-D-ribulose 1-phosphate = 5-methylsulfanyl-2,3-dioxopentyl phosphate + H2O. It participates in amino-acid biosynthesis; L-methionine biosynthesis via salvage pathway; L-methionine from S-methyl-5-thio-alpha-D-ribose 1-phosphate: step 2/6. Its function is as follows. Catalyzes the dehydration of methylthioribulose-1-phosphate (MTRu-1-P) into 2,3-diketo-5-methylthiopentyl-1-phosphate (DK-MTP-1-P). This chain is Probable methylthioribulose-1-phosphate dehydratase, found in Anopheles gambiae (African malaria mosquito).